A 447-amino-acid chain; its full sequence is Phosphoglucosamine mutase (447 aa).

The active-site Phosphoserine intermediate is serine 107. Residues serine 107, aspartate 246, aspartate 248, and aspartate 250 each contribute to the Mg(2+) site. Serine 107 bears the Phosphoserine mark.

This sequence belongs to the phosphohexose mutase family. The cofactor is Mg(2+). Activated by phosphorylation.

The catalysed reaction is alpha-D-glucosamine 1-phosphate = D-glucosamine 6-phosphate. Its function is as follows. Catalyzes the conversion of glucosamine-6-phosphate to glucosamine-1-phosphate. The protein is Phosphoglucosamine mutase of Ralstonia nicotianae (strain ATCC BAA-1114 / GMI1000) (Ralstonia solanacearum).